A 378-amino-acid chain; its full sequence is Phosphoglycerate kinase (378 aa).

(2R)-3-phosphoglycerate contacts are provided by Val-1, Asp-2, Phe-3, Asn-4, Asn-16, Arg-17, Ser-40, His-41, Gly-43, Arg-44, Leu-99, Arg-100, His-147, and Arg-148. Residue Gly-191 coordinates ADP. Residue Gly-191 participates in CDP binding. Positions 192 and 193 each coordinate AMP. ATP is bound at residue Ala-192. Residue Ala-192 coordinates Mg(2+). A CDP-binding site is contributed by Asp-196. Asp-196 is a binding site for Mg(2+). Position 197 (Lys-197) interacts with AMP. Residue Lys-197 coordinates ATP. An ADP-binding site is contributed by Gly-215. Gly-215 is a CDP binding site. Gly-216 and Gly-288 together coordinate AMP. ATP is bound by residues Gly-216 and Gly-288. CDP-binding residues include Gly-313 and Phe-318. Phe-318 is a binding site for ADP. Glu-319 contacts AMP. Residues Glu-319, Asp-351, and Thr-352 each coordinate ATP. Position 351 (Asp-351) interacts with Mg(2+).

It belongs to the phosphoglycerate kinase family. Monomer. The cofactor is Mg(2+).

The enzyme catalyses (2R)-3-phosphoglycerate + ATP = (2R)-3-phospho-glyceroyl phosphate + ADP. It participates in carbohydrate degradation; glycolysis; pyruvate from D-glyceraldehyde 3-phosphate: step 2/5. In Condylostoma magnum, this protein is Phosphoglycerate kinase (PGK).